The primary structure comprises 491 residues: tRNA-2-methylthio-N(6)-dimethylallyladenosine synthase (491 aa).

The MTTase N-terminal domain occupies 54–172 (KTYHIKTFGC…ILNLLEQVIF (119 aa)). [4Fe-4S] cluster-binding residues include C63, C99, C133, C209, C213, and C216. Residues 195-426 (RTNNLKGFVN…NEMVKTFSKK (232 aa)) enclose the Radical SAM core domain. The region spanning 429-491 (EKYVNKVLDV…RFTLNGKMID (63 aa)) is the TRAM domain.

It belongs to the methylthiotransferase family. MiaB subfamily. In terms of assembly, monomer. Requires [4Fe-4S] cluster as cofactor.

The protein localises to the cytoplasm. It catalyses the reaction N(6)-dimethylallyladenosine(37) in tRNA + (sulfur carrier)-SH + AH2 + 2 S-adenosyl-L-methionine = 2-methylsulfanyl-N(6)-dimethylallyladenosine(37) in tRNA + (sulfur carrier)-H + 5'-deoxyadenosine + L-methionine + A + S-adenosyl-L-homocysteine + 2 H(+). In terms of biological role, catalyzes the methylthiolation of N6-(dimethylallyl)adenosine (i(6)A), leading to the formation of 2-methylthio-N6-(dimethylallyl)adenosine (ms(2)i(6)A) at position 37 in tRNAs that read codons beginning with uridine. The protein is tRNA-2-methylthio-N(6)-dimethylallyladenosine synthase of Malacoplasma penetrans (strain HF-2) (Mycoplasma penetrans).